The sequence spans 326 residues: Phenylalanine--tRNA ligase alpha subunit (326 aa).

Mg(2+) is bound at residue Glu251.

Belongs to the class-II aminoacyl-tRNA synthetase family. Phe-tRNA synthetase alpha subunit type 1 subfamily. In terms of assembly, tetramer of two alpha and two beta subunits. It depends on Mg(2+) as a cofactor.

It is found in the cytoplasm. It carries out the reaction tRNA(Phe) + L-phenylalanine + ATP = L-phenylalanyl-tRNA(Phe) + AMP + diphosphate + H(+). The polypeptide is Phenylalanine--tRNA ligase alpha subunit (Idiomarina loihiensis (strain ATCC BAA-735 / DSM 15497 / L2-TR)).